Here is a 591-residue protein sequence, read N- to C-terminus: Proteasome-associated ATPase (591 aa).

A coiled-coil region spans residues 8 to 77; sequence DSVAAARELE…LREEVDRLGQ (70 aa). 278-283 serves as a coordination point for ATP; sequence GCGKTL. Residues 590 to 591 form a docks into pockets in the proteasome alpha-ring region; sequence YL.

Belongs to the AAA ATPase family. As to quaternary structure, homohexamer. Assembles into a hexameric ring structure that caps the 20S proteasome core. Strongly interacts with the prokaryotic ubiquitin-like protein Pup through a hydrophobic interface; the interacting region of ARC lies in its N-terminal coiled-coil domain. There is one Pup binding site per ARC hexamer ring. Upon ATP-binding, the C-terminus of ARC interacts with the alpha-rings of the proteasome core, possibly by binding to the intersubunit pockets.

Its pathway is protein degradation; proteasomal Pup-dependent pathway. Functionally, ATPase which is responsible for recognizing, binding, unfolding and translocation of pupylated proteins into the bacterial 20S proteasome core particle. May be essential for opening the gate of the 20S proteasome via an interaction with its C-terminus, thereby allowing substrate entry and access to the site of proteolysis. Thus, the C-termini of the proteasomal ATPase may function like a 'key in a lock' to induce gate opening and therefore regulate proteolysis. The protein is Proteasome-associated ATPase of Rhodococcus jostii (strain RHA1).